A 425-amino-acid polypeptide reads, in one-letter code: Serine--tRNA ligase (425 aa).

Residue 231–233 (TAE) coordinates L-serine. Residue 262-264 (RSE) participates in ATP binding. Glu-285 serves as a coordination point for L-serine. 349–352 (EISS) contributes to the ATP binding site. Ser-385 is a binding site for L-serine.

The protein belongs to the class-II aminoacyl-tRNA synthetase family. Type-1 seryl-tRNA synthetase subfamily. Homodimer. The tRNA molecule binds across the dimer.

The protein resides in the cytoplasm. It carries out the reaction tRNA(Ser) + L-serine + ATP = L-seryl-tRNA(Ser) + AMP + diphosphate + H(+). The enzyme catalyses tRNA(Sec) + L-serine + ATP = L-seryl-tRNA(Sec) + AMP + diphosphate + H(+). It functions in the pathway aminoacyl-tRNA biosynthesis; selenocysteinyl-tRNA(Sec) biosynthesis; L-seryl-tRNA(Sec) from L-serine and tRNA(Sec): step 1/1. Functionally, catalyzes the attachment of serine to tRNA(Ser). Is also able to aminoacylate tRNA(Sec) with serine, to form the misacylated tRNA L-seryl-tRNA(Sec), which will be further converted into selenocysteinyl-tRNA(Sec). The sequence is that of Serine--tRNA ligase from Exiguobacterium sibiricum (strain DSM 17290 / CCUG 55495 / CIP 109462 / JCM 13490 / 255-15).